Reading from the N-terminus, the 545-residue chain is Chromosomal replication initiator protein DnaA (545 aa).

Residues 1 to 72 form a domain I, interacts with DnaA modulators region; that stretch reads MNDFWQHCSA…DMARDFWQAP (72 aa). Positions 72 to 208 are domain II; it reads PVDVQFVLDP…GETDSMYERS (137 aa). Low complexity predominate over residues 90–105; the sequence is AAAPAPASARPASAPG. Disordered stretches follow at residues 90–112 and 181–204; these read AAAP…GSAG and AAAR…TDSM. The span at 189 to 201 shows a compositional bias: polar residues; it reads PGQSASSNGNGET. The domain III, AAA+ region stretch occupies residues 209-425; that stretch reads KLNPVLTFDN…GALRKILAYS (217 aa). Positions 253, 255, 256, and 257 each coordinate ATP. Positions 426 to 545 are domain IV, binds dsDNA; sequence KFHGREITIE…LHVLEQTLKG (120 aa).

It belongs to the DnaA family. In terms of assembly, oligomerizes as a right-handed, spiral filament on DNA at oriC.

It localises to the cytoplasm. Its function is as follows. Plays an essential role in the initiation and regulation of chromosomal replication. ATP-DnaA binds to the origin of replication (oriC) to initiate formation of the DNA replication initiation complex once per cell cycle. Binds the DnaA box (a 9 base pair repeat at the origin) and separates the double-stranded (ds)DNA. Forms a right-handed helical filament on oriC DNA; dsDNA binds to the exterior of the filament while single-stranded (ss)DNA is stabiized in the filament's interior. The ATP-DnaA-oriC complex binds and stabilizes one strand of the AT-rich DNA unwinding element (DUE), permitting loading of DNA polymerase. After initiation quickly degrades to an ADP-DnaA complex that is not apt for DNA replication. Binds acidic phospholipids. The sequence is that of Chromosomal replication initiator protein DnaA from Paraburkholderia phytofirmans (strain DSM 17436 / LMG 22146 / PsJN) (Burkholderia phytofirmans).